Reading from the N-terminus, the 148-residue chain is uncharacterized protein (148 aa).

Residues 7 to 29 (MLILMSLVKIVLTCLPTGVIEWL) form a helical membrane-spanning segment.

The protein resides in the membrane. This is an uncharacterized protein from Bacillus subtilis (strain 168).